We begin with the raw amino-acid sequence, 139 residues long: D-ribose pyranase (139 aa).

The active-site Proton donor is H20. Residues D28, H106, and 128-130 each bind substrate; that span reads YAN.

It belongs to the RbsD / FucU family. RbsD subfamily. Homodecamer.

It localises to the cytoplasm. It catalyses the reaction beta-D-ribopyranose = beta-D-ribofuranose. It participates in carbohydrate metabolism; D-ribose degradation; D-ribose 5-phosphate from beta-D-ribopyranose: step 1/2. Its function is as follows. Catalyzes the interconversion of beta-pyran and beta-furan forms of D-ribose. The protein is D-ribose pyranase of Serratia proteamaculans (strain 568).